We begin with the raw amino-acid sequence, 264 residues long: Thymidylate synthase (264 aa).

DUMP contacts are provided by residues R21 and 126–127 (RR). C146 (nucleophile) is an active-site residue. Residues 166-169 (RSAD), N177, and 207-209 (HLY) each bind dUMP. D169 contributes to the (6R)-5,10-methylene-5,6,7,8-tetrahydrofolate binding site. A263 is a (6R)-5,10-methylene-5,6,7,8-tetrahydrofolate binding site.

It belongs to the thymidylate synthase family. Bacterial-type ThyA subfamily. In terms of assembly, homodimer.

It localises to the cytoplasm. It catalyses the reaction dUMP + (6R)-5,10-methylene-5,6,7,8-tetrahydrofolate = 7,8-dihydrofolate + dTMP. It participates in pyrimidine metabolism; dTTP biosynthesis. Functionally, catalyzes the reductive methylation of 2'-deoxyuridine-5'-monophosphate (dUMP) to 2'-deoxythymidine-5'-monophosphate (dTMP) while utilizing 5,10-methylenetetrahydrofolate (mTHF) as the methyl donor and reductant in the reaction, yielding dihydrofolate (DHF) as a by-product. This enzymatic reaction provides an intracellular de novo source of dTMP, an essential precursor for DNA biosynthesis. The polypeptide is Thymidylate synthase (Rhodopseudomonas palustris (strain ATCC BAA-98 / CGA009)).